The sequence spans 65 residues: Putative beta-neurotoxin RjAa4 (65 aa).

Residues 1 to 64 (KEGYPMGRDG…VWDSSTNKCG (64 aa)) form the LCN-type CS-alpha/beta domain. Intrachain disulfides connect cysteine 11–cysteine 63, cysteine 15–cysteine 37, cysteine 22–cysteine 44, and cysteine 26–cysteine 46.

It belongs to the long (4 C-C) scorpion toxin superfamily. Sodium channel inhibitor family. Beta subfamily. As to expression, expressed by the venom gland.

It is found in the secreted. Beta toxins bind voltage-independently at site-4 of sodium channels (Nav) and shift the voltage of activation toward more negative potentials thereby affecting sodium channel activation and promoting spontaneous and repetitive firing. This chain is Putative beta-neurotoxin RjAa4, found in Rhopalurus junceus (Caribbean blue scorpion).